The chain runs to 231 residues: Dephospho-CoA kinase (231 aa).

The 203-residue stretch at 29–231 folds into the DPCK domain; the sequence is RVGLTGGIAS…IAGALRFDRR (203 aa). Position 37 to 42 (37 to 42) interacts with ATP; the sequence is ASGKST.

The protein belongs to the CoaE family.

Its subcellular location is the cytoplasm. It catalyses the reaction 3'-dephospho-CoA + ATP = ADP + CoA + H(+). It participates in cofactor biosynthesis; coenzyme A biosynthesis; CoA from (R)-pantothenate: step 5/5. Functionally, catalyzes the phosphorylation of the 3'-hydroxyl group of dephosphocoenzyme A to form coenzyme A. This is Dephospho-CoA kinase from Cutibacterium acnes (strain DSM 16379 / KPA171202) (Propionibacterium acnes).